An 89-amino-acid chain; its full sequence is Acyl-CoA-binding protein (89 aa).

Residues 3–88 (LKEEFEEHAE…VKQLFEAAGS (86 aa)) form the ACB domain. Residues 30 to 34 (YGLYK), Lys56, and Tyr75 each bind an acyl-CoA.

Belongs to the ACBP family.

Its function is as follows. Binds medium- and long-chain acyl-CoA esters with very high affinity and may function as an intracellular carrier of acyl-CoA esters. This chain is Acyl-CoA-binding protein, found in Gossypium hirsutum (Upland cotton).